A 238-amino-acid chain; its full sequence is Endonuclease V (238 aa).

Mg(2+) contacts are provided by Asp-46 and Asp-116.

The protein belongs to the endonuclease V family. It depends on Mg(2+) as a cofactor.

It is found in the cytoplasm. The enzyme catalyses Endonucleolytic cleavage at apurinic or apyrimidinic sites to products with a 5'-phosphate.. Functionally, DNA repair enzyme involved in the repair of deaminated bases. Selectively cleaves double-stranded DNA at the second phosphodiester bond 3' to a deoxyinosine leaving behind the intact lesion on the nicked DNA. The sequence is that of Endonuclease V from Bacillus velezensis (strain DSM 23117 / BGSC 10A6 / LMG 26770 / FZB42) (Bacillus amyloliquefaciens subsp. plantarum).